The following is a 146-amino-acid chain: Transcriptional regulator MraZ (146 aa).

SpoVT-AbrB domains lie at 5 to 50 (SSFH…TFNE) and 77 to 120 (ACEC…SREQ).

Belongs to the MraZ family. As to quaternary structure, forms oligomers.

It localises to the cytoplasm. The protein resides in the nucleoid. In Desulforapulum autotrophicum (strain ATCC 43914 / DSM 3382 / VKM B-1955 / HRM2) (Desulfobacterium autotrophicum), this protein is Transcriptional regulator MraZ.